The primary structure comprises 828 residues: Beta-galactosidase (828 aa).

The signal sequence occupies residues 1–20 (MKMKQFNLLSLFLILITSFG). Residues Asn23 and Asn153 are each glycosylated (N-linked (GlcNAc...) asparagine). Glu183 functions as the Proton donor in the catalytic mechanism. Catalysis depends on Glu252, which acts as the Nucleophile. N-linked (GlcNAc...) asparagine glycosylation is found at Asn253, Asn350, Asn379, Asn492, Asn667, Asn799, and Asn803. Positions 742–828 (AHEHNKVELS…PKRLFVEVEC (87 aa)) constitute an SUEL-type lectin domain.

This sequence belongs to the glycosyl hydrolase 35 family.

It is found in the secreted. Its subcellular location is the extracellular space. It localises to the apoplast. It carries out the reaction Hydrolysis of terminal non-reducing beta-D-galactose residues in beta-D-galactosides.. This is Beta-galactosidase from Brassica oleracea (Wild cabbage).